A 743-amino-acid polypeptide reads, in one-letter code: Conserved oligomeric Golgi complex subunit 8 (743 aa).

2 disordered regions span residues 549 to 672 (EDGP…TEPE) and 704 to 743 (TQDD…KKDD). Composition is skewed to basic and acidic residues over residues 563–581 (ESVK…HGTD), 594–621 (PVKE…HETP), 633–647 (SEAK…HLEL), and 654–664 (QEIREQEHKEV). The segment covering 704–726 (TQDDPIEEEEGWGWGDDDGEEQE) has biased composition (acidic residues). Over residues 727 to 743 (ISSKEVESPKEKCKKDD) the composition is skewed to basic and acidic residues.

The protein belongs to the COG8 family. As to quaternary structure, component of the conserved oligomeric Golgi complex which is composed of eight different subunits and is required for normal Golgi morphology and localization.

It is found in the golgi apparatus membrane. Its function is as follows. Required for normal Golgi function. The chain is Conserved oligomeric Golgi complex subunit 8 (cogc-8) from Caenorhabditis elegans.